The chain runs to 237 residues: Sugar fermentation stimulation protein homolog (237 aa).

Belongs to the SfsA family.

The chain is Sugar fermentation stimulation protein homolog from Pseudomonas putida (strain GB-1).